The primary structure comprises 318 residues: Methionyl-tRNA formyltransferase (318 aa).

112-115 (SILP) provides a ligand contact to (6S)-5,6,7,8-tetrahydrofolate.

It belongs to the Fmt family.

The catalysed reaction is L-methionyl-tRNA(fMet) + (6R)-10-formyltetrahydrofolate = N-formyl-L-methionyl-tRNA(fMet) + (6S)-5,6,7,8-tetrahydrofolate + H(+). In terms of biological role, attaches a formyl group to the free amino group of methionyl-tRNA(fMet). The formyl group appears to play a dual role in the initiator identity of N-formylmethionyl-tRNA by promoting its recognition by IF2 and preventing the misappropriation of this tRNA by the elongation apparatus. The sequence is that of Methionyl-tRNA formyltransferase from Shewanella sp. (strain W3-18-1).